A 90-amino-acid polypeptide reads, in one-letter code: Putative membrane protein insertion efficiency factor (90 aa).

The protein belongs to the UPF0161 family.

The protein resides in the cell membrane. Functionally, could be involved in insertion of integral membrane proteins into the membrane. This chain is Putative membrane protein insertion efficiency factor, found in Lactococcus lactis subsp. cremoris (strain SK11).